A 265-amino-acid polypeptide reads, in one-letter code: MKIAIAGASGRMGRMLIEAVLNDSDAQLVGALDRADSPFLGQDAGTFLGKETGVKLTADLDAVFAQADTLIDFTRPEGTMAHIEAALRHDVKLVIGTTGFTAEQKAELQAAAGKIGIVFAANMSVGVNVTLKLLEFAAKHFSHGYDIEIIEAHHRHKVDAPSGTALMMGEAVAGALGRSLDDCAVYGRHGVTGERDPSSIGFAAVRGGDIVGDHTVLFAGIGERIEITHKSSSRVSYAQGALRAVHFLSARGAGLFDMQDVLGLR.

Residues Gly-7–Met-12 and Asp-33 contribute to the NAD(+) site. Arg-34 is a binding site for NADP(+). NAD(+) contacts are provided by residues Gly-96 to Thr-98 and Ala-120 to Met-123. Catalysis depends on His-153, which acts as the Proton donor/acceptor. His-154 serves as a coordination point for (S)-2,3,4,5-tetrahydrodipicolinate. Lys-157 functions as the Proton donor in the catalytic mechanism. Gly-163–Thr-164 contributes to the (S)-2,3,4,5-tetrahydrodipicolinate binding site.

Belongs to the DapB family.

It is found in the cytoplasm. It catalyses the reaction (S)-2,3,4,5-tetrahydrodipicolinate + NAD(+) + H2O = (2S,4S)-4-hydroxy-2,3,4,5-tetrahydrodipicolinate + NADH + H(+). The enzyme catalyses (S)-2,3,4,5-tetrahydrodipicolinate + NADP(+) + H2O = (2S,4S)-4-hydroxy-2,3,4,5-tetrahydrodipicolinate + NADPH + H(+). It functions in the pathway amino-acid biosynthesis; L-lysine biosynthesis via DAP pathway; (S)-tetrahydrodipicolinate from L-aspartate: step 4/4. Its function is as follows. Catalyzes the conversion of 4-hydroxy-tetrahydrodipicolinate (HTPA) to tetrahydrodipicolinate. The chain is 4-hydroxy-tetrahydrodipicolinate reductase from Burkholderia lata (strain ATCC 17760 / DSM 23089 / LMG 22485 / NCIMB 9086 / R18194 / 383).